We begin with the raw amino-acid sequence, 318 residues long: NAD kinase (318 aa).

Residue aspartate 80 is the Proton acceptor of the active site. NAD(+) contacts are provided by residues 80–81 (DG), arginine 85, 155–156 (NE), aspartate 185, and 196–201 (TAYAFS).

It belongs to the NAD kinase family. A divalent metal cation serves as cofactor.

It is found in the cytoplasm. It catalyses the reaction NAD(+) + ATP = ADP + NADP(+) + H(+). In terms of biological role, involved in the regulation of the intracellular balance of NAD and NADP, and is a key enzyme in the biosynthesis of NADP. Catalyzes specifically the phosphorylation on 2'-hydroxyl of the adenosine moiety of NAD to yield NADP. This is NAD kinase from Corynebacterium efficiens (strain DSM 44549 / YS-314 / AJ 12310 / JCM 11189 / NBRC 100395).